Reading from the N-terminus, the 146-residue chain is Probable trivalent organoarsenical cleaving enzyme (146 aa).

Positions 2-118 (KYVHVGVNVV…DGNEWEFFYT (117 aa)) constitute a VOC domain. Positions 5 and 62 each coordinate Fe(2+). Roxarsone (III) contacts are provided by C95 and C96. Position 114 (E114) interacts with Fe(2+).

It to M.tuberculosis Rv2641. The cofactor is Fe(2+).

It catalyses the reaction methylarsonous acid + AH2 + O2 = arsenite + methanol + A + H(+). It carries out the reaction roxarsone (III) + AH2 + O2 = 4-hydroxy-3-nitrocyclohexa-2,5-dien-1-one + arsenite + A + H(+). The enzyme catalyses nitarsone (III) + AH2 + O2 = 4-nitrocyclohexa-2,5-dien-1-one + arsenite + A + H(+). The catalysed reaction is 4-aminophenylarsonous acid + AH2 + O2 = 4-aminocyclohexa-2,5-dien-1-one + arsenite + A. Functionally, nonheme iron-dependent dioxygenase that can break carbon-arsenic bonds, playing a role in the detoxification of environmental organoarsenical compounds. Catalyzes the oxygen-dependent demethylation of highly toxic methylarsonous acid (MAs(III)) to arsenite, which can then be exported out of the cell. Can also cleave the C-As bond in several trivalent aromatic arsenicals, including roxarsone (III), nitarsone (III) and (4-aminophenyl)arsonous acid. Organoarsenical degradation by this enzyme is proposed to have a significant impact on the arsenic biogeocycle that maintains a balance between organic and inorganic species. This chain is Probable trivalent organoarsenical cleaving enzyme (yqcK), found in Bacillus subtilis (strain 168).